We begin with the raw amino-acid sequence, 392 residues long: 8-amino-7-oxononanoate synthase (392 aa).

Arginine 19 provides a ligand contact to substrate. Residue 106 to 107 (GY) participates in pyridoxal 5'-phosphate binding. Residue histidine 131 coordinates substrate. 3 residues coordinate pyridoxal 5'-phosphate: serine 176, histidine 204, and threonine 233. Lysine 236 bears the N6-(pyridoxal phosphate)lysine mark. Threonine 350 contacts substrate.

Belongs to the class-II pyridoxal-phosphate-dependent aminotransferase family. BioF subfamily. As to quaternary structure, homodimer. Pyridoxal 5'-phosphate is required as a cofactor.

It carries out the reaction 6-carboxyhexanoyl-[ACP] + L-alanine + H(+) = (8S)-8-amino-7-oxononanoate + holo-[ACP] + CO2. It functions in the pathway cofactor biosynthesis; biotin biosynthesis. Functionally, catalyzes the decarboxylative condensation of pimeloyl-[acyl-carrier protein] and L-alanine to produce 8-amino-7-oxononanoate (AON), [acyl-carrier protein], and carbon dioxide. This Pseudomonas fluorescens (strain ATCC BAA-477 / NRRL B-23932 / Pf-5) protein is 8-amino-7-oxononanoate synthase.